The chain runs to 505 residues: Deoxyguanosinetriphosphate triphosphohydrolase (505 aa).

Positions 66–273 constitute an HD domain; sequence RLTHSMEVQQ…MEAADDISYC (208 aa).

Belongs to the dGTPase family. Type 1 subfamily. In terms of assembly, homotetramer. The cofactor is Mg(2+).

The catalysed reaction is dGTP + H2O = 2'-deoxyguanosine + triphosphate + H(+). Its function is as follows. dGTPase preferentially hydrolyzes dGTP over the other canonical NTPs. This Escherichia coli O7:K1 (strain IAI39 / ExPEC) protein is Deoxyguanosinetriphosphate triphosphohydrolase.